Here is a 160-residue protein sequence, read N- to C-terminus: MIKNKKQKSYTSVYALGQYISMSAHKARRVIDQIRGRSYEEALMILELMPYRGCYPIFKLVYSAAANASHNKGFKETNLVISKAEVNQGNTVKKLKPRARGRSYPIKRSTCHITIVLEDTSFYQQYEEYLMYLKKPGYSNENRNLTCYDTYSSGGLWDKK.

This sequence belongs to the universal ribosomal protein uL22 family. Part of the 50S ribosomal subunit.

It localises to the plastid. It is found in the chloroplast. In terms of biological role, this protein binds specifically to 23S rRNA. The globular domain of the protein is located near the polypeptide exit tunnel on the outside of the subunit, while an extended beta-hairpin is found that lines the wall of the exit tunnel in the center of the 70S ribosome. This Arabis hirsuta (Hairy rock-cress) protein is Large ribosomal subunit protein uL22c (rpl22).